The sequence spans 322 residues: HPr kinase/phosphorylase (322 aa).

Catalysis depends on residues H146 and K167. 161 to 168 lines the ATP pocket; sequence GDSGLGKS. A Mg(2+)-binding site is contributed by S168. Residue D185 is the Proton acceptor; for phosphorylation activity. Proton donor; for dephosphorylation activity of the active site. The segment at 209-218 is important for the catalytic mechanism of both phosphorylation and dephosphorylation; that stretch reads LEVRGLGLLD. A Mg(2+)-binding site is contributed by E210. Residue R250 is part of the active site. The tract at residues 271–276 is important for the catalytic mechanism of dephosphorylation; that stretch reads QVAAGR.

This sequence belongs to the HPrK/P family. Homohexamer. Mg(2+) serves as cofactor.

It catalyses the reaction [HPr protein]-L-serine + ATP = [HPr protein]-O-phospho-L-serine + ADP + H(+). The enzyme catalyses [HPr protein]-O-phospho-L-serine + phosphate + H(+) = [HPr protein]-L-serine + diphosphate. Catalyzes the ATP- as well as the pyrophosphate-dependent phosphorylation of a specific serine residue in HPr, a phosphocarrier protein of the phosphoenolpyruvate-dependent sugar phosphotransferase system (PTS). HprK/P also catalyzes the pyrophosphate-producing, inorganic phosphate-dependent dephosphorylation (phosphorolysis) of seryl-phosphorylated HPr (P-Ser-HPr). In Burkholderia ambifaria (strain ATCC BAA-244 / DSM 16087 / CCUG 44356 / LMG 19182 / AMMD) (Burkholderia cepacia (strain AMMD)), this protein is HPr kinase/phosphorylase.